Reading from the N-terminus, the 502-residue chain is Phenylalanine--tRNA ligase alpha subunit (502 aa).

L-phenylalanine is bound by residues T339, 382–384 (QIE), and Y422. Residue E424 participates in Mg(2+) binding. F448 lines the L-phenylalanine pocket.

Belongs to the class-II aminoacyl-tRNA synthetase family. Phe-tRNA synthetase alpha subunit type 2 subfamily. As to quaternary structure, tetramer of two alpha and two beta subunits. It depends on Mg(2+) as a cofactor.

It localises to the cytoplasm. It carries out the reaction tRNA(Phe) + L-phenylalanine + ATP = L-phenylalanyl-tRNA(Phe) + AMP + diphosphate + H(+). This is Phenylalanine--tRNA ligase alpha subunit from Halobacterium salinarum (strain ATCC 29341 / DSM 671 / R1).